The following is a 424-amino-acid chain: MARKKIREYDSKRLLKEHLKRLANIDLQIRSAQVTESTDFTELTNQESWLSSTKLVVKPDMLFGKRGKSGLVALKLDLAEVADFVKARLGTEVEMEGCKAPITTFIVEPFVPHDQEYYLSIVSDRLGCTISFSECGGIEIEENWDKVKTIFLPAEKSMTLEVCAPLIATLPLEVRAKIGNFIMGAFAVFQDLDFSFMEMNPFTLVDGEPFPLDMRGELDDTAAFKNFNKWGDIEFPLPFGRVLSSTENFIHGLDEKTSASLKFTVLNPKGRIWTMVAGGGASVIYADTVGDLGYASELGNYAEYSGAPNEEEVLQYARVVIDCATTDPDGRKRALLIGGGIANFTDVAATFNGIIRALREKETRLKASRMHIYVRRGGPNYQTGLARMRALGEELGVPLEVYGPEATMTGICKRAIDCIMLPDA.

Citrate contacts are provided by asparagine 343, threonine 345, and arginine 376.

This sequence belongs to the succinate/malate CoA ligase beta subunit family. As to quaternary structure, heterooctamer of 4 alpha and 4 beta chains.

It localises to the cytoplasm. Its subcellular location is the cytosol. The enzyme catalyses oxaloacetate + acetyl-CoA + ADP + phosphate = citrate + ATP + CoA. ATP citrate-lyase is the primary enzyme responsible for the synthesis of cytosolic acetyl-CoA, used for the elongation of fatty acids and biosynthesis of isoprenoids, flavonoids and malonated derivatives. May supply substrate to the cytosolic acetyl-CoA carboxylase, which generates the malonyl-CoA used for the synthesis of a multitude of compounds, including very long chain fatty acids and flavonoids. Required for normal growth and development and elongation of C18 fatty acids to C20 to C24 fatty acids in seeds. In contrast to all known animal ACL enzymes having a homomeric structure, plant ACLs are composed of alpha and beta chains. This Arabidopsis thaliana (Mouse-ear cress) protein is ATP-citrate synthase alpha chain protein 3 (ACLA-3).